The chain runs to 293 residues: Lysosomal amino acid transporter 1 homolog (293 aa).

Over 1-37 (MVWRTLVASNFSTCPNGSIQWIWDVFGECAQDGWDEA) the chain is Lumenal. The N-linked (GlcNAc...) asparagine glycan is linked to Asn10. One can recognise a PQ-loop 1 domain in the interval 34–100 (WDEASVALGL…LADQLPLQTY (67 aa)). A helical membrane pass occupies residues 38–58 (SVALGLVSIFCFAASTFPQYI). The Cytoplasmic segment spans residues 59-71 (KACKTGNMDQALS). Residues 72–92 (LWFLLGWIGGDSCNLIGSFLA) form a helical membrane-spanning segment. The Lumenal segment spans residues 93 to 96 (DQLP). A helical membrane pass occupies residues 97–117 (LQTYTAVYYVLADLLMLTLYF). Topologically, residues 118–126 (HYKFKKQPS) are cytoplasmic. A helical membrane pass occupies residues 127 to 147 (LLSAPINSVLLFILGTVCITP). At 148–182 (LLSSTDPVAVPREGFRGRTLLSVEPGNKPFTKKEV) the chain is on the lumenal side. Residues 183 to 203 (VGFVIGSASSVLYLLSRLPQI) traverse the membrane as a helical segment. A PQ-loop 2 domain is found at 191-243 (SSVLYLLSRLPQIRTNFVRQSTQGISYSLFALVMLGNTLYGLSVLLKNPEVGQ). Over 204–214 (RTNFVRQSTQG) the chain is Cytoplasmic. A helical transmembrane segment spans residues 215 to 235 (ISYSLFALVMLGNTLYGLSVL). Over 236-254 (LKNPEVGQSEGSYLLHHLP) the chain is Lumenal. The chain crosses the membrane as a helical span at residues 255–275 (WLVGSLGVLLLDTIISIQFLV). The Cytoplasmic segment spans residues 276–293 (YRSHDADAASEREPLLPS). A Di-leucine motif motif is present at residues 290-291 (LL).

This sequence belongs to the laat-1 family.

It localises to the lysosome membrane. Its function is as follows. Amino acid transporter that specifically mediates the pH-dependent export of the cationic amino acids arginine, histidine and lysine from lysosomes. In Rattus norvegicus (Rat), this protein is Lysosomal amino acid transporter 1 homolog (Slc66a1).